The sequence spans 181 residues: Large ribosomal subunit protein uL10 (181 aa).

This sequence belongs to the universal ribosomal protein uL10 family. Part of the ribosomal stalk of the 50S ribosomal subunit. The N-terminus interacts with L11 and the large rRNA to form the base of the stalk. The C-terminus forms an elongated spine to which L12 dimers bind in a sequential fashion forming a multimeric L10(L12)X complex.

Forms part of the ribosomal stalk, playing a central role in the interaction of the ribosome with GTP-bound translation factors. The chain is Large ribosomal subunit protein uL10 from Fervidobacterium nodosum (strain ATCC 35602 / DSM 5306 / Rt17-B1).